The primary structure comprises 367 residues: Porin Omp2a (367 aa).

Positions 1–22 are cleaved as a signal peptide; that stretch reads MNIKSLLLGSAAALVAASGAQA.

This sequence belongs to the alphaproteobacteria porin family. As to quaternary structure, monomer.

The protein localises to the cell outer membrane. In terms of biological role, forms passive diffusion pores that allow small molecular weight hydrophilic materials across the outer membrane. The protein is Porin Omp2a (omp2a) of Brucella suis.